Reading from the N-terminus, the 397-residue chain is Lipid-A-disaccharide synthase (397 aa).

It belongs to the LpxB family.

It carries out the reaction a lipid X + a UDP-2-N,3-O-bis[(3R)-3-hydroxyacyl]-alpha-D-glucosamine = a lipid A disaccharide + UDP + H(+). It participates in bacterial outer membrane biogenesis; LPS lipid A biosynthesis. Its function is as follows. Condensation of UDP-2,3-diacylglucosamine and 2,3-diacylglucosamine-1-phosphate to form lipid A disaccharide, a precursor of lipid A, a phosphorylated glycolipid that anchors the lipopolysaccharide to the outer membrane of the cell. This is Lipid-A-disaccharide synthase from Mannheimia succiniciproducens (strain KCTC 0769BP / MBEL55E).